The chain runs to 930 residues: Dual serine/threonine and tyrosine protein kinase (930 aa).

Positions 1–14 (MEGDGVPWGSEPVS) are enriched in low complexity. Residues 1–22 (MEGDGVPWGSEPVSGPGPGGGG) form a disordered region. Coiled-coil stretches lie at residues 190–216 (EEDL…MHHA) and 396–432 (RKKE…KEEL). The Protein kinase domain maps to 653-907 (PKLGQELGRG…PLLGIVQPML (255 aa)). Residues 659 to 667 (LGRGQYGVV) and K682 each bind ATP. D778 (proton acceptor) is an active-site residue.

This sequence belongs to the protein kinase superfamily. Ser/Thr protein kinase family.

The protein resides in the cytoplasm. It localises to the cell membrane. It is found in the apical cell membrane. Its subcellular location is the basolateral cell membrane. The protein localises to the cell junction. It catalyses the reaction L-seryl-[protein] + ATP = O-phospho-L-seryl-[protein] + ADP + H(+). It carries out the reaction L-threonyl-[protein] + ATP = O-phospho-L-threonyl-[protein] + ADP + H(+). The catalysed reaction is L-tyrosyl-[protein] + ATP = O-phospho-L-tyrosyl-[protein] + ADP + H(+). Functionally, acts as a positive regulator of ERK phosphorylation downstream of fibroblast growth factor-receptor activation. Involved in the regulation of both caspase-dependent apoptosis and caspase-independent cell death. In the skin, it plays a predominant role in suppressing caspase-dependent apoptosis in response to UV stress in a range of dermal cell types. The protein is Dual serine/threonine and tyrosine protein kinase (DSTYK) of Pan troglodytes (Chimpanzee).